Here is a 306-residue protein sequence, read N- to C-terminus: Putative S-adenosyl-L-methionine-dependent methyltransferase MAP_4190c (306 aa).

Residues D129 and 158–159 contribute to the S-adenosyl-L-methionine site; that span reads DL.

The protein belongs to the UPF0677 family.

Functionally, exhibits S-adenosyl-L-methionine-dependent methyltransferase activity. The chain is Putative S-adenosyl-L-methionine-dependent methyltransferase MAP_4190c from Mycolicibacterium paratuberculosis (strain ATCC BAA-968 / K-10) (Mycobacterium paratuberculosis).